The following is a 501-amino-acid chain: MSERCRCKYSSGASIDYMPTSTQAKMVSKRIAQETFDAAVRENIEEFAMGPDEAVKEAVEQFESQGVDLSNIVKTAPKVSADGSQEPTHDILQTLSDLQESVASSRPQEVSAYLTRFCDQCKQDKACRFLAAQKGAYPIIFTAWKLATAGDQGLLLQSLNALSVLTDGQPDLLDTQGLQLLVATLTRNADEADLTCSGIRCVRHACLKHEQNRQDLVKAGVLPLLTGAITHHGHHADVVREACCALRVMTFDDDIRVPFGHAHNHAKMIVQENKGLKVLIEATKAFLDNPGILSELCGTLSRLAIRNEFCQEVVDLGGLSILVSLLADCNDHQMGDQSSVQELVKQVLSILRAIAGNDDVKDAIVRAGGTESIVAAMTQHLTSPQVCEQSCAALCFLALRKPDNSRIIVEGGGAVAALQAMKAHPQKAGVQKQACMLIRNLVAHSQAFSKPILDLGAEALIMQARSAHRDCEDVAKAALRDLGCHVELRELWTGQRGNLAP.

At Ser64 the chain carries Phosphoserine. ARM repeat units follow at residues 220–264, 274–318, 319–369, and 370–412; these read GVLP…HAHN, KGLK…DLGG, LSIL…RAGG, and TESI…VEGG. Residue His263 is modified to Pros-methylhistidine.

It belongs to the ARMC6 family. Methylated at His-263 by METTL9.

This Pongo abelii (Sumatran orangutan) protein is Armadillo repeat-containing protein 6 (ARMC6).